A 70-amino-acid polypeptide reads, in one-letter code: Putative antitoxin VapB34 (70 aa).

Functionally, antitoxin component of a possible type II toxin-antitoxin (TA) system. The cognate toxin is VapC34. In Mycobacterium tuberculosis (strain CDC 1551 / Oshkosh), this protein is Putative antitoxin VapB34 (vapB34).